The primary structure comprises 172 residues: Putative phosphoesterase BCG9842_B4061 (172 aa).

His-34 functions as the Proton donor in the catalytic mechanism. 2 short sequence motifs (HXTX) span residues 34–37 (HITL) and 115–118 (HLTI). The active-site Proton acceptor is the His-115.

Belongs to the 2H phosphoesterase superfamily. YjcG family.

The polypeptide is Putative phosphoesterase BCG9842_B4061 (Bacillus cereus (strain G9842)).